Here is a 523-residue protein sequence, read N- to C-terminus: Solute carrier family 35 member F5 (523 aa).

The next 2 helical transmembrane spans lie at 69-89 and 101-121; these read MALGIVILLLVDVIWVASSEL and FFSTFAKTSMFVLYLLGFIIW. Phosphoserine is present on S207. Transmembrane regions (helical) follow at residues 243–263, 268–288, 296–316, 327–347, 361–381, 395–415, 420–440, and 452–472; these read ISFFFCFVWFLANLSYQEALS, AIVNILSSTSGLFTLILAAVF, FTLSKLLAVILSIGGVVLVNL, TIGSIWSLAGAMLYAVYIVMI, MFFGFVGLFNLLLLWPGFFLL, VVLMCIIINGLIGTVLSEFLW, FLTSSLIGTLALSLTIPLSII, and WLFFAGAIPVFFSFFIVTLLC. The EamA domain maps to 252 to 316; sequence FLANLSYQEA…SIGGVVLVNL (65 aa).

The protein belongs to the SLC35F solute transporter family.

It localises to the membrane. Its function is as follows. Putative solute transporter. The chain is Solute carrier family 35 member F5 (SLC35F5) from Pongo abelii (Sumatran orangutan).